We begin with the raw amino-acid sequence, 101 residues long: NAD(P)H-quinone oxidoreductase subunit 4L, chloroplastic (101 aa).

A run of 3 helical transmembrane segments spans residues 2-22 (MLEHIPVLSAYLFSIDIYGLI), 32-52 (MCLELILNAVNINFVTFSDFF), and 61-81 (IFSIFVIAIAAAEAAIGSAIV).

Belongs to the complex I subunit 4L family. As to quaternary structure, NDH is composed of at least 16 different subunits, 5 of which are encoded in the nucleus.

It localises to the plastid. It is found in the chloroplast thylakoid membrane. It catalyses the reaction a plastoquinone + NADH + (n+1) H(+)(in) = a plastoquinol + NAD(+) + n H(+)(out). It carries out the reaction a plastoquinone + NADPH + (n+1) H(+)(in) = a plastoquinol + NADP(+) + n H(+)(out). NDH shuttles electrons from NAD(P)H:plastoquinone, via FMN and iron-sulfur (Fe-S) centers, to quinones in the photosynthetic chain and possibly in a chloroplast respiratory chain. The immediate electron acceptor for the enzyme in this species is believed to be plastoquinone. Couples the redox reaction to proton translocation, and thus conserves the redox energy in a proton gradient. The protein is NAD(P)H-quinone oxidoreductase subunit 4L, chloroplastic of Gossypium barbadense (Sea Island cotton).